Reading from the N-terminus, the 476-residue chain is UDP-glucose 6-dehydrogenase (476 aa).

NAD(+) is bound by residues 7–12 (GAGYVG), aspartate 32, arginine 37, 85–89 (VNTPT), 126–127 (ST), and glutamate 161. Residues 157-161 (EFLAE), 216-220 (KLAAN), arginine 256, and 263-269 (QASVGFG) each bind substrate. Catalysis depends on cysteine 272, which acts as the Nucleophile. 272 to 275 (CFQK) provides a ligand contact to NAD(+). Residue 334 to 335 (FK) participates in substrate binding. NAD(+) is bound at residue arginine 342. Arginine 439 contributes to the substrate binding site.

The protein belongs to the UDP-glucose/GDP-mannose dehydrogenase family.

It catalyses the reaction UDP-alpha-D-glucose + 2 NAD(+) + H2O = UDP-alpha-D-glucuronate + 2 NADH + 3 H(+). It functions in the pathway nucleotide-sugar biosynthesis; UDP-alpha-D-glucuronate biosynthesis; UDP-alpha-D-glucuronate from UDP-alpha-D-glucose: step 1/1. Its function is as follows. Involved in the biosynthesis of glycosaminoglycans; hyaluronan, chondroitin sulfate and heparan sulfate. Required for wingless signaling in different tissues. This chain is UDP-glucose 6-dehydrogenase (sgl), found in Drosophila melanogaster (Fruit fly).